A 295-amino-acid chain; its full sequence is Urease accessory protein UreD (295 aa).

Belongs to the UreD family. UreD, UreF and UreG form a complex that acts as a GTP-hydrolysis-dependent molecular chaperone, activating the urease apoprotein by helping to assemble the nickel containing metallocenter of UreC. The UreE protein probably delivers the nickel.

The protein resides in the cytoplasm. Functionally, required for maturation of urease via the functional incorporation of the urease nickel metallocenter. The sequence is that of Urease accessory protein UreD from Saccharophagus degradans (strain 2-40 / ATCC 43961 / DSM 17024).